The chain runs to 203 residues: Putative GPI-anchored protein YHR214W (203 aa).

The N-terminal stretch at 1–23 is a signal peptide; sequence MFNRFNKFQAAVALALLSRGALG. N-linked (GlcNAc...) asparagine glycans are attached at residues Asn28 and Asn138. Asn184 carries GPI-anchor amidated asparagine lipidation. The propeptide at 185–203 is removed in mature form; it reads AGTFSLSNAILNGGSVSGL.

It is found in the cell membrane. In Saccharomyces cerevisiae (strain ATCC 204508 / S288c) (Baker's yeast), this protein is Putative GPI-anchored protein YHR214W.